The sequence spans 520 residues: Probable cytosol aminopeptidase (520 aa).

Positions 232 and 237 each coordinate Mn(2+). Lysine 244 is a catalytic residue. Positions 255, 314, and 316 each coordinate Mn(2+). The active site involves arginine 318. The segment at 488 to 520 (KAKKSTAKKATTKKTTTRKTASKTKSTKSKARK) is disordered.

Belongs to the peptidase M17 family. Requires Mn(2+) as cofactor.

It localises to the cytoplasm. The catalysed reaction is Release of an N-terminal amino acid, Xaa-|-Yaa-, in which Xaa is preferably Leu, but may be other amino acids including Pro although not Arg or Lys, and Yaa may be Pro. Amino acid amides and methyl esters are also readily hydrolyzed, but rates on arylamides are exceedingly low.. It catalyses the reaction Release of an N-terminal amino acid, preferentially leucine, but not glutamic or aspartic acids.. Presumably involved in the processing and regular turnover of intracellular proteins. Catalyzes the removal of unsubstituted N-terminal amino acids from various peptides. The polypeptide is Probable cytosol aminopeptidase (pepA) (Metamycoplasma salivarium (Mycoplasma salivarium)).